A 305-amino-acid polypeptide reads, in one-letter code: Transcription factor MYB87 (305 aa).

HTH myb-type domains lie at 9 to 66 (KMAV…RPNL) and 67 to 117 (KHGG…KKKL). DNA-binding regions (H-T-H motif) lie at residues 38 to 62 (WISLPQRIGIKRCGKSCRLRWLNYL) and 90 to 113 (WSIIASQLPGRTDNDIKNYWNTRL).

Expressed in roots, leaves, internodes, shoot tips and flowers.

The protein localises to the nucleus. In terms of biological role, transcription factor that functions as a regulator of genes affecting cell wall organization and remodeling. Activates genes related to the primary cell wall and represses genes related to the secondary cell wall and expansins. Required for the regulation of longitudinal cell growth in stems, leaves, petioles, roots, flowers and siliques. In Arabidopsis thaliana (Mouse-ear cress), this protein is Transcription factor MYB87.